A 127-amino-acid polypeptide reads, in one-letter code: Large ribosomal subunit protein bL21 (127 aa).

The protein belongs to the bacterial ribosomal protein bL21 family. In terms of assembly, part of the 50S ribosomal subunit. Contacts protein L20.

Functionally, this protein binds to 23S rRNA in the presence of protein L20. This Synechococcus sp. (strain ATCC 27144 / PCC 6301 / SAUG 1402/1) (Anacystis nidulans) protein is Large ribosomal subunit protein bL21.